Here is an 83-residue protein sequence, read N- to C-terminus: Bowman-Birk type proteinase inhibitor (83 aa).

Intrachain disulfides connect Cys-18-Cys-72, Cys-19-Cys-34, Cys-22-Cys-68, Cys-24-Cys-32, Cys-42-Cys-49, Cys-46-Cys-61, and Cys-51-Cys-59.

The protein belongs to the Bowman-Birk serine protease inhibitor family.

This Phaseolus lunatus (Lima bean) protein is Bowman-Birk type proteinase inhibitor.